The primary structure comprises 417 residues: Protein-lysine 6-oxidase (417 aa).

An N-terminal signal peptide occupies residues 1 to 21; sequence MRFAWTVLLLGPLQLCALVHC. Positions 22-168 are cleaved as a propeptide — removed by BMP1; that stretch reads APPAAGQQQP…PPSRVDGMVG (147 aa). The disordered stretch occupies residues 64–89; sequence YQPQRRRDPGAAVPGAANASAQQPRT. Low complexity predominate over residues 73 to 84; sequence GAAVPGAANASA. N-linked (GlcNAc...) asparagine glycans are attached at residues N81, N97, and N144. The interval 137–174 is disordered; that stretch reads AGASRAENQTAPGEVPALSNLRPPSRVDGMVGDDPYNP. The residue at position 187 (Y187) is a Sulfotyrosine. A lysyl-oxidase like region spans residues 213-417; that stretch reads PDLVADPYYI…YASGCTISPY (205 aa). Cystine bridges form between C238/C244, C291/C340, C324/C330, C351/C361, and C398/C412. Residues H292, H294, and H296 each contribute to the Cu cation site. The lysine tyrosylquinone (Lys-Tyr) cross-link spans 320 to 355; it reads KASFCLEDTSCDYGYHRRFACTAHTQGLSPGCYDTY. Y355 is modified (2',4',5'-topaquinone).

Belongs to the lysyl oxidase family. As to quaternary structure, interacts with MFAP4. Interacts (via propeptide) with EFEMP2; this interaction is strong and facilitates formation of ternary complexes with ELN during elastic fiber assembly; this interaction limits interaction of EFEMP2 with FBLN5. It depends on Cu cation as a cofactor. Requires lysine tyrosylquinone residue as cofactor. In terms of processing, the lysine tyrosylquinone cross-link (LTQ) is generated by condensation of the epsilon-amino group of a lysine with a topaquinone produced by oxidation of tyrosine. Post-translationally, proteolytically cleaved by BMP1 which removes the propeptide. Also proteolytically cleaved by ADAMTS2 and ADAMTS14, but not by ADAMTS3, at an additional cleavage site downstream of the BMP1 cleavage site. The propeptide plays a role in directing the deposition of this enzyme to elastic fibers, via interaction with tropoelastin. Cleavage by BMP1 to remove the propeptide does not increase enzymatic activity but increases binding to collagen. Cleavage by ADAMTS2 produces a form with reduced collagen-binding activity. Sulfated at Tyr-187 and also at either Tyr-183 or Tyr-184 which enhances binding to collagen. As to expression, heart, placenta, skeletal muscle, kidney, lung and pancreas.

It is found in the secreted. It localises to the extracellular space. It catalyses the reaction L-lysyl-[protein] + O2 + H2O = (S)-2-amino-6-oxohexanoyl-[protein] + H2O2 + NH4(+). Functionally, responsible for the post-translational oxidative deamination of peptidyl lysine residues in precursors to fibrous collagen and elastin. Regulator of Ras expression. May play a role in tumor suppression. Plays a role in the aortic wall architecture. The protein is Protein-lysine 6-oxidase (LOX) of Homo sapiens (Human).